Here is a 963-residue protein sequence, read N- to C-terminus: Kinesin-1 heavy chain (963 aa).

Ala2 is subject to N-acetylalanine. Residues 8–325 form the Kinesin motor domain; sequence NIKVMCRFRP…LLFGQRAKTI (318 aa). Position 85–92 (85–92) interacts with ATP; the sequence is GQTSSGKT. A Glycyl lysine isopeptide (Lys-Gly) (interchain with G-Cter in SUMO2) cross-link involves residue Lys213. Positions 329-914 form a coiled coil; the sequence is VCVNVELTAE…AVRSKNMARR (586 aa). The disordered stretch occupies residues 908 to 963; the sequence is SKNMARRGHSAQIAKPIRPGQHPAASPTHPGTVRGGGSFVQNNQPVGLRGGGGKQS. The interval 915 to 963 is globular; the sequence is GHSAQIAKPIRPGQHPAASPTHPGTVRGGGSFVQNNQPVGLRGGGGKQS. Residues Ser933 and Ser945 each carry the phosphoserine modification. At Arg956 the chain carries Omega-N-methylarginine.

It belongs to the TRAFAC class myosin-kinesin ATPase superfamily. Kinesin family. Kinesin subfamily. In terms of assembly, oligomer composed of two heavy chains and two light chains. Interacts with GRIP1 and PPP1R42. Interacts with SYBU. Interacts with JAKMIP1. Interacts with PLEKHM2. Interacts with ECPAS. Interacts with ZFYVE27. Found in a complex with OGT, RHOT1, RHOT2 and TRAK1. Interacts with APP (via cytoplasmic domain).

Its subcellular location is the cytoplasm. The protein localises to the cytoskeleton. It localises to the cytolytic granule membrane. The protein resides in the lysosome membrane. Functionally, microtubule-dependent motor required for normal distribution of mitochondria and lysosomes. May be involved in the mechanisms of growth arrest induced by exposure to DNA-damaging drugs or by cellular senescence. Can induce formation of neurite-like membrane protrusions in non-neuronal cells in a ZFYVE27-dependent manner. Regulates centrosome and nuclear positioning during mitotic entry. During the G2 phase of the cell cycle in a BICD2-dependent manner, antagonizes dynein function and drives the separation of nuclei and centrosomes. Required for anterograde axonal transportation of MAPK8IP3/JIP3 which is essential for MAPK8IP3/JIP3 function in axon elongation. Through binding with PLEKHM2 and ARL8B, directs lysosome movement toward microtubule plus ends. Involved in NK cell-mediated cytotoxicity. Drives the polarization of cytolytic granules and microtubule-organizing centers (MTOCs) toward the immune synapse between effector NK lymphocytes and target cells. The polypeptide is Kinesin-1 heavy chain (Kif5b) (Mus musculus (Mouse)).